Reading from the N-terminus, the 732-residue chain is Elongation factor 2 (732 aa).

A tr-type G domain is found at 19-260 (ERIRNIDIAA…MVIKNLPNPR (242 aa)). GTP is bound by residues 28-35 (AHIDHGKT), 94-98 (DTPGH), and 148-151 (NKVD). The residue at position 598 (H598) is a Diphthamide.

It belongs to the TRAFAC class translation factor GTPase superfamily. Classic translation factor GTPase family. EF-G/EF-2 subfamily.

It localises to the cytoplasm. Catalyzes the GTP-dependent ribosomal translocation step during translation elongation. During this step, the ribosome changes from the pre-translocational (PRE) to the post-translocational (POST) state as the newly formed A-site-bound peptidyl-tRNA and P-site-bound deacylated tRNA move to the P and E sites, respectively. Catalyzes the coordinated movement of the two tRNA molecules, the mRNA and conformational changes in the ribosome. This is Elongation factor 2 from Picrophilus torridus (strain ATCC 700027 / DSM 9790 / JCM 10055 / NBRC 100828 / KAW 2/3).